A 642-amino-acid chain; its full sequence is Extracellular metalloproteinase 5 (642 aa).

The first 19 residues, 1 to 19, serve as a signal peptide directing secretion; the sequence is MHGLLLAAGLLSLPLHVLA. Residues 20–246 constitute a propeptide that is removed on maturation; the sequence is HPQPSTTTSL…VHNVVDYVAH (227 aa). Residue N287 is glycosylated (N-linked (GlcNAc...) asparagine). H430 provides a ligand contact to Zn(2+). E431 is an active-site residue. H434 is a Zn(2+) binding site. 2 N-linked (GlcNAc...) asparagine glycosylation sites follow: N595 and N624.

The protein belongs to the peptidase M36 family. It depends on Zn(2+) as a cofactor.

The protein localises to the secreted. Its function is as follows. Secreted metalloproteinase that allows assimilation of proteinaceous substrates and probably acts as a virulence factor. The protein is Extracellular metalloproteinase 5 (MEP5) of Arthroderma gypseum (strain ATCC MYA-4604 / CBS 118893) (Microsporum gypseum).